A 249-amino-acid chain; its full sequence is NADH dehydrogenase [ubiquinone] flavoprotein 2, mitochondrial (249 aa).

Residues 1–32 constitute a mitochondrion transit peptide; sequence MFFSAALRARAAGLTAQWGRHVRNLHKTAMQN. N6-acetyllysine is present on lysine 61. Residues cysteine 135, cysteine 140, cysteine 176, and cysteine 180 each coordinate [2Fe-2S] cluster. Phosphotyrosine; by SRC is present on tyrosine 193. The interval 213–249 is disordered; that stretch reads IPKPGPRSGRFSCEPAGGLTSLTEPPKGPGFGVQAGL.

Belongs to the complex I 24 kDa subunit family. Core subunit of respiratory chain NADH dehydrogenase (Complex I) which is composed of 45 different subunits. This is a component of the flavoprotein-sulfur (FP) fragment of the enzyme. It depends on [2Fe-2S] cluster as a cofactor.

Its subcellular location is the mitochondrion inner membrane. It catalyses the reaction a ubiquinone + NADH + 5 H(+)(in) = a ubiquinol + NAD(+) + 4 H(+)(out). Functionally, core subunit of the mitochondrial membrane respiratory chain NADH dehydrogenase (Complex I) which catalyzes electron transfer from NADH through the respiratory chain, using ubiquinone as an electron acceptor. Parts of the peripheral arm of the enzyme, where the electrons from NADH are accepted by flavin mononucleotide (FMN) and then passed along a chain of iron-sulfur clusters by electron tunnelling to the final acceptor ubiquinone. Contains one iron-sulfur cluster. The protein is NADH dehydrogenase [ubiquinone] flavoprotein 2, mitochondrial of Gorilla gorilla gorilla (Western lowland gorilla).